A 1014-amino-acid polypeptide reads, in one-letter code: Pre-mRNA-processing ATP-dependent RNA helicase prp11 (1014 aa).

The span at 1–11 (MSRRTRSRSPP) shows a compositional bias: basic residues. A disordered region spans residues 1 to 149 (MSRRTRSRSP…SRFDRTERVG (149 aa)). Basic and acidic residues-rich tracts occupy residues 15 to 87 (YNRE…EYAR) and 106 to 121 (RHAEEKEVDNKTKSDE). Positions 418-446 (TSWSQCGLSAQTISVINSLGYEKPTSIQA) match the Q motif motif. Positions 449–627 (IPAITSGRDV…RKVLKKPVEI (179 aa)) constitute a Helicase ATP-binding domain. Residue 462-469 (AKTGSGKT) participates in ATP binding. The DEAD box signature appears at 575 to 578 (DEAD). One can recognise a Helicase C-terminal domain in the interval 638-802 (EVEQIVEVRP…PVPKELQTLA (165 aa)). A disordered region spans residues 815-875 (KAAGGGFGGK…PEKSTGDPTL (61 aa)). Basic and acidic residues-rich tracts occupy residues 827-838 (SRLDETRNAERK) and 855-875 (AEAKSPLEKITPEKSTGDPTL).

The protein belongs to the DEAD box helicase family. DDX46/PRP5 subfamily.

Its subcellular location is the nucleus. It catalyses the reaction ATP + H2O = ADP + phosphate + H(+). In terms of biological role, ATP-dependent RNA helicase involved in pre-spliceosome/complex A assembly and mRNA splicing. Bridges U1 and U2 snRNPs during pre-spliceosome assembly and enables stable U2 snRNP association with intron RNA. Through its helicase activity probably catalyzes an ATP-dependent conformational change of U2 snRNP. The protein is Pre-mRNA-processing ATP-dependent RNA helicase prp11 (prp11) of Schizosaccharomyces pombe (strain 972 / ATCC 24843) (Fission yeast).